The chain runs to 315 residues: MAIQIVLIVGPTASGKSKLAVDVAKEFNGEIISADSMQVYKYMDVGTAKITKEEMQGIPHYLIDIVEPDQEFSVAEYEKRAKEIIKDIYKRGKLPIIVGGTGLYINSIIYIMHFSDFEGSKEFREKMKELANTYGSQYLYEKLKSVDPEAAKKIHPNDIRRIIRALEVYEFTGKPISYYQKMSGMRLNPEYQPIMIGLNFRDRQILYDRINQRVDEMIKNNLVEEVVNLLKIGYNKDSTAMQALGYKEIVEYLKGEISLEEAIEKIKKGTRRYAKRQITWFKGYDFIKWFFVDDYKNYEELKKNIIKYLAGKLNF.

10 to 17 (GPTASGKS) lines the ATP pocket. 12 to 17 (TASGKS) serves as a coordination point for substrate. The tract at residues 35–38 (DSMQ) is interaction with substrate tRNA.

The protein belongs to the IPP transferase family. As to quaternary structure, monomer. The cofactor is Mg(2+).

The catalysed reaction is adenosine(37) in tRNA + dimethylallyl diphosphate = N(6)-dimethylallyladenosine(37) in tRNA + diphosphate. Functionally, catalyzes the transfer of a dimethylallyl group onto the adenine at position 37 in tRNAs that read codons beginning with uridine, leading to the formation of N6-(dimethylallyl)adenosine (i(6)A). The chain is tRNA dimethylallyltransferase from Thermoanaerobacter pseudethanolicus (strain ATCC 33223 / 39E) (Clostridium thermohydrosulfuricum).